A 49-amino-acid chain; its full sequence is Large ribosomal subunit protein bL33 (49 aa).

Belongs to the bacterial ribosomal protein bL33 family.

The sequence is that of Large ribosomal subunit protein bL33 from Alkaliphilus oremlandii (strain OhILAs) (Clostridium oremlandii (strain OhILAs)).